The primary structure comprises 127 residues: S-adenosylmethionine decarboxylase proenzyme (127 aa).

Residue S63 is the Schiff-base intermediate with substrate; via pyruvic acid of the active site. At S63 the chain carries Pyruvic acid (Ser); by autocatalysis. The active-site Proton acceptor; for processing activity is H68. C83 acts as the Proton donor; for catalytic activity in catalysis.

It belongs to the prokaryotic AdoMetDC family. Type 1 subfamily. In terms of assembly, heterotetramer of two alpha and two beta chains arranged as a dimer of alpha/beta heterodimers. Requires pyruvate as cofactor. In terms of processing, is synthesized initially as an inactive proenzyme. Formation of the active enzyme involves a self-maturation process in which the active site pyruvoyl group is generated from an internal serine residue via an autocatalytic post-translational modification. Two non-identical subunits are generated from the proenzyme in this reaction, and the pyruvate is formed at the N-terminus of the alpha chain, which is derived from the carboxyl end of the proenzyme. The post-translation cleavage follows an unusual pathway, termed non-hydrolytic serinolysis, in which the side chain hydroxyl group of the serine supplies its oxygen atom to form the C-terminus of the beta chain, while the remainder of the serine residue undergoes an oxidative deamination to produce ammonia and the pyruvoyl group blocking the N-terminus of the alpha chain.

It catalyses the reaction S-adenosyl-L-methionine + H(+) = S-adenosyl 3-(methylsulfanyl)propylamine + CO2. The protein operates within amine and polyamine biosynthesis; S-adenosylmethioninamine biosynthesis; S-adenosylmethioninamine from S-adenosyl-L-methionine: step 1/1. Its function is as follows. Catalyzes the decarboxylation of S-adenosylmethionine to S-adenosylmethioninamine (dcAdoMet), the propylamine donor required for the synthesis of the polyamines spermine and spermidine from the diamine putrescine. In Carboxydothermus hydrogenoformans (strain ATCC BAA-161 / DSM 6008 / Z-2901), this protein is S-adenosylmethionine decarboxylase proenzyme.